The sequence spans 152 residues: Small integral membrane protein 28 (152 aa).

A helical transmembrane segment spans residues 52–72; it reads FLCILLPATILLFLAFLLLFL. Residues 117-152 are disordered; sequence PLPPEATLPSQCLPPSYEEATRNPPGEEAQGCSPSV.

It localises to the membrane. This chain is Small integral membrane protein 28, found in Homo sapiens (Human).